The sequence spans 160 residues: MGNIAVCPGSFDPVTLGHLDIIKRGAKIFDEVYVCVLNNSSKKPLFTVEERCELIRQATKDLPNIKVESFHGLLVDYAKQKEAKVILRGLRAVTDFEYEMQGTSMNKVLNDDIETFFMMTNNQYSFLSSSIVKEVAKYDGSVKGLVPKEVEEALIEKFKG.

Substrate is bound at residue Ser-10. Residues Ser-10 to Phe-11 and His-18 each bind ATP. Substrate-binding residues include Lys-42, Leu-74, and Arg-88. Residues Gly-89 to Arg-91, Glu-99, and Tyr-124 to Ser-130 contribute to the ATP site.

This sequence belongs to the bacterial CoaD family. In terms of assembly, homohexamer. Requires Mg(2+) as cofactor.

The protein localises to the cytoplasm. It carries out the reaction (R)-4'-phosphopantetheine + ATP + H(+) = 3'-dephospho-CoA + diphosphate. Its pathway is cofactor biosynthesis; coenzyme A biosynthesis; CoA from (R)-pantothenate: step 4/5. Its function is as follows. Reversibly transfers an adenylyl group from ATP to 4'-phosphopantetheine, yielding dephospho-CoA (dPCoA) and pyrophosphate. The polypeptide is Phosphopantetheine adenylyltransferase (Bacillus pumilus (strain SAFR-032)).